The sequence spans 348 residues: uncharacterized protein (348 aa).

This is an uncharacterized protein from Aquifex aeolicus (strain VF5).